We begin with the raw amino-acid sequence, 309 residues long: Aromatic prenyltransferase (309 aa).

The protein belongs to the aromatic prenyltransferase family.

Its function is as follows. Prenyltransferase that attaches isoprenoid moieties to carbon atoms of aromatic substrates in an enzyme-catalyzed Friedel-Crafts reaction. Shows specificity for dimethylallyl diphosphate (DMAPP) and does not accept geranyl diphosphate (GPP) or isopentenyl diphosphate (IPP). Prenylates the artificial substrate 2,7-dihydroxynaphthalene (2,7-DHN), as well as dihydrophenazine-1-carboxylic acid and 4-hydroxybenzoic acid at lower levels. Only traces of products are detected with aspulvinone E or flaviolin as substrates; and no product is formed with L-tryptophan, L-tyrosine, or 4-hydroxyphenylpyruvate. Ptf seems no to be involved in the prenylation reaction in the biosynthesis of aspulvinone H and J and the physiological function of ptf remains unknown. The protein is Aromatic prenyltransferase of Sclerotinia sclerotiorum (strain ATCC 18683 / 1980 / Ss-1) (White mold).